Reading from the N-terminus, the 727-residue chain is Phosphoribosylformylglycinamidine synthase subunit PurL (727 aa).

H47 is an active-site residue. Y50 and K89 together coordinate ATP. Position 91 (E91) interacts with Mg(2+). Substrate contacts are provided by residues 92–95 and R114; that span reads SHNH. H93 acts as the Proton acceptor in catalysis. D115 serves as a coordination point for Mg(2+). Residue Q238 participates in substrate binding. D266 contributes to the Mg(2+) binding site. 310-312 serves as a coordination point for substrate; that stretch reads ESQ. D490 and G527 together coordinate ATP. Residue N528 coordinates Mg(2+). S530 contacts substrate.

Belongs to the FGAMS family. Monomer. Part of the FGAM synthase complex composed of 1 PurL, 1 PurQ and 2 PurS subunits.

The protein localises to the cytoplasm. The catalysed reaction is N(2)-formyl-N(1)-(5-phospho-beta-D-ribosyl)glycinamide + L-glutamine + ATP + H2O = 2-formamido-N(1)-(5-O-phospho-beta-D-ribosyl)acetamidine + L-glutamate + ADP + phosphate + H(+). Its pathway is purine metabolism; IMP biosynthesis via de novo pathway; 5-amino-1-(5-phospho-D-ribosyl)imidazole from N(2)-formyl-N(1)-(5-phospho-D-ribosyl)glycinamide: step 1/2. Functionally, part of the phosphoribosylformylglycinamidine synthase complex involved in the purines biosynthetic pathway. Catalyzes the ATP-dependent conversion of formylglycinamide ribonucleotide (FGAR) and glutamine to yield formylglycinamidine ribonucleotide (FGAM) and glutamate. The FGAM synthase complex is composed of three subunits. PurQ produces an ammonia molecule by converting glutamine to glutamate. PurL transfers the ammonia molecule to FGAR to form FGAM in an ATP-dependent manner. PurS interacts with PurQ and PurL and is thought to assist in the transfer of the ammonia molecule from PurQ to PurL. This chain is Phosphoribosylformylglycinamidine synthase subunit PurL, found in Acidiphilium cryptum (strain JF-5).